Consider the following 917-residue polypeptide: MLKKLGIKGRVLLLTLLPTSLMALVLGGYFTWMQLSDLQTQLLQRGEMIAEQLASLVAPAMGNHNTQMLERIATQALEQQDVRAVSLLAPDRSLLAHAGPSMLNPPPAGNSSHMMQRSGSDATRYQLPVFGRHRNLAGDLIPDESDRLLGWVELELSHSGMLLRGYRSLFASLLLIAAGLAGTALLAVRMGRTINNPLTQIKQAVAQLKDGNLETRLPPLGSQELDELASGINRMASTLQNAQEELQHSIDQATEDVRQNLETIEIQNIELDLARKEALEASRIKSEFLANMSHEIRTPLNGILGFTHLLQKSELTPRQLDYLGTIEKSADSLLGIINEILDFSKIEAGKLVLDSIPFNLRDLLQDTLTILAPAAHAKQLELVSLVYRDTPLSLVGDPLRLKQILTNLVSNAIKFTREGTIVARAMLEEEHEDSVQLRISIQDTGIGLSNQDVRALFQAFSQADNSLSRQPGGTGLGLVISKRLIEQMGGEIGVDSTPGEGSEFWISLNLPKTRDDAEDLPGPPLLGRRVAVLENHELARQALQHQLEDCGLEVTPFNTLEALTNGITGVHQSEQAIDLAVLGITTNDMSPERLSQHIWDLEHLGCKVLVLCPTTEQTLFHLSVPNPHSQLQAKPACTRKLRRALSDLVTPRRARSEPEETLSSRAPRVLCVDDNPANLLLIQTLLEDMGAKVLAVDNGYAALNAIQTEPFDLVMMDVQMPGMDGRQSTEAIRQWESERHGTPLPIVALTAHAMANEKRALLQSGMDDYLTKPISERQLAQVVLKWTGLALRNQGPERASERPELGLELQVLDQDEGLRLAAGKADLAADMLAMLLASLDADREAIKAARAANDQNALIERVHRLHGATRYCGVPQLRAACQRSETLLKQEDAKAFAALDELDHAIGRLAAEARTNA.

Helical transmembrane passes span 11 to 31 and 168 to 188; these read VLLL…GYFT and SLFA…LLAV. The 53-residue stretch at 192–244 folds into the HAMP domain; sequence RTINNPLTQIKQAVAQLKDGNLETRLPPLGSQELDELASGINRMASTLQNAQE. Residues 291–512 enclose the Histidine kinase domain; sequence NMSHEIRTPL…EFWISLNLPK (222 aa). His294 bears the Phosphohistidine; by autocatalysis mark. The 120-residue stretch at 668 to 787 folds into the Response regulatory domain; the sequence is RVLCVDDNPA…QLAQVVLKWT (120 aa). Asp717 bears the 4-aspartylphosphate mark. In terms of domain architecture, HPt spans 824–917; sequence KADLAADMLA…RLAAEARTNA (94 aa). At His863 the chain carries Phosphohistidine.

Activation requires a sequential transfer of a phosphate group from a His in the primary transmitter domain, to an Asp in the receiver domain and to a His in the secondary transmitter domain.

It is found in the cell inner membrane. It catalyses the reaction ATP + protein L-histidine = ADP + protein N-phospho-L-histidine.. In terms of biological role, member of the two-component regulatory system GacA/GacS which controls the expression of secondary metabolites and extracellular products. Activates GacA by phosphorylation. GacA acts (probably primarily) by activating expression of CsrA1 and CsrA2 antagonist small RNAs (sRNA) RsmX, RsmY and RsmZ which bind to and prevent translation repression by CsrA1 and CsrA2. Involved in the regulation of secondary metabolism and in the synthesis of the antifungal factors cyanide, 2,4-diacetylphloroglucinol and pyoluteorin. Exercises positive post-transcriptional control over the hcnABC and aprA genes; acts upstream of CsrA2 (rsmA). Controls expression of CsrA1 and CsrA2 antagonist sRNAs RsmX, RsmY and probably RsmZ. Probably controls expression of csrA1 (rsmE) and csrA2. The chain is Sensor histidine kinase GacS (gacS) from Pseudomonas protegens (strain DSM 19095 / LMG 27888 / CFBP 6595 / CHA0).